The chain runs to 111 residues: uncharacterized protein (111 aa).

Positions 1–26 (MDLKDGVEEEEGAGENGKGGTHAQRV) are disordered.

This is an uncharacterized protein from Caenorhabditis elegans.